Here is a 327-residue protein sequence, read N- to C-terminus: Protein MRG2 (327 aa).

The tract at residues 1 to 40 (MGSPNAAAETDLTTDDFIGDTRRDSGSDTETNTDCDGEDL) is disordered. Positions 52–101 (FEEGERVLAKHSDCFYEAKVLKVEFKDNEWKYFVHYIGWNKSWDEWIRLD) constitute a Tudor-knot domain. The interval 133–156 (SKMKPRSPNVARGRKRKQDSVDTE) is disordered. Residues 162-327 (SDNLLSFNIP…AVEEMEKKEG (166 aa)) form the MRG domain.

In terms of assembly, interacts with HAM1 and HAM2. Interacts (via MRG domain) with CO. Component of the NuA4 histone acetyltransferase complex. In terms of tissue distribution, ubiquitous. Mainly expressed in the vasculature of cotyledons and leaves, and in roots and inflorescences.

It localises to the nucleus. Chromatin remodeling factor. Acts as a 'reader' protein by binding to H3K4me3 and H3K36me3 to control histone H4 acetylation. Increases the transcriptional levels of the flowering time genes FLC and FT. Binds the chromatin at the FT promoter upon interaction with CO. The chain is Protein MRG2 from Arabidopsis thaliana (Mouse-ear cress).